A 253-amino-acid polypeptide reads, in one-letter code: MPDQTQQFSFKVLTINIHKGFTAFNRRFILPELRDAVRTVSADIVCLQEVMGAHEVHPLHVENWPDTSHYEFLADTMWSDFAYGRNAVYPEGHHGNAVLSRYPIEHYENRDVSVDGAEKRGVLYCRIVPPMTGKAIHVMCVHLGLREAHRQAQLAMLAEWVNELPDGEPVLVAGDFNDWRQKANHPLKVQAGLDEIFTRAHGRPARTFPVQFPLLRLDRIYVKNASASAPTALPLRTWRHLSDHAPLSAEIHL.

This is an uncharacterized protein from Escherichia coli O6:H1 (strain CFT073 / ATCC 700928 / UPEC).